A 257-amino-acid chain; its full sequence is Diphthine synthase (257 aa).

Residues Ile11, Asp89, Ile92, 117-118, Leu169, Leu210, and His235 each bind S-adenosyl-L-methionine; that span reads SV.

The protein belongs to the diphthine synthase family. As to quaternary structure, homodimer.

The enzyme catalyses 2-[(3S)-amino-3-carboxypropyl]-L-histidyl-[translation elongation factor 2] + 3 S-adenosyl-L-methionine = diphthine-[translation elongation factor 2] + 3 S-adenosyl-L-homocysteine + 3 H(+). The protein operates within protein modification; peptidyl-diphthamide biosynthesis. S-adenosyl-L-methionine-dependent methyltransferase that catalyzes the trimethylation of the amino group of the modified target histidine residue in translation elongation factor 2 (EF-2), to form an intermediate called diphthine. The three successive methylation reactions represent the second step of diphthamide biosynthesis. The chain is Diphthine synthase from Saccharolobus islandicus (strain L.S.2.15 / Lassen #1) (Sulfolobus islandicus).